A 257-amino-acid chain; its full sequence is V-type proton ATPase subunit D (257 aa).

The interval 211 to 233 (KKKDLKAKEAQKEENSANKTIME) is disordered. Over residues 216 to 226 (KAKEAQKEENS) the composition is skewed to basic and acidic residues.

It belongs to the V-ATPase D subunit family. As to quaternary structure, V-ATPase is a heteromultimeric enzyme composed of a peripheral catalytic V1 complex (components A to H) attached to an integral membrane V0 proton pore complex (components: a, c, c', c'' and d).

Functionally, subunit of the peripheral V1 complex of vacuolar ATPase. Vacuolar ATPase is responsible for acidifying a variety of intracellular compartments in eukaryotic cells, thus providing most of the energy required for transport processes in the vacuolar system. The polypeptide is V-type proton ATPase subunit D (atp6v1d) (Dictyostelium discoideum (Social amoeba)).